The chain runs to 185 residues: MTDHSCIPELKVRYVQQIVPDMMRDFGYSTVMQVPKLLKIVLSMGLGEALANRKLLDASVADLGVISGQHAVKTRARKSIANFKLREGNEIGVMVTLRRSRMYEFLHRLINVALPRVKDFRGVSPXGFDGHGNYSMGITEQIIFPEIDFDKIERISGLNVNVVTSAQTDQEARTLLTKLGMPFRK.

Belongs to the universal ribosomal protein uL5 family. In terms of assembly, part of the 50S ribosomal subunit; part of the 5S rRNA/L5/L18/L25 subcomplex. Contacts the 5S rRNA and the P site tRNA. Forms a bridge to the 30S subunit in the 70S ribosome.

This is one of the proteins that bind and probably mediate the attachment of the 5S RNA into the large ribosomal subunit, where it forms part of the central protuberance. In the 70S ribosome it contacts protein S13 of the 30S subunit (bridge B1b), connecting the 2 subunits; this bridge is implicated in subunit movement. Contacts the P site tRNA; the 5S rRNA and some of its associated proteins might help stabilize positioning of ribosome-bound tRNAs. The protein is Large ribosomal subunit protein uL5 of Treponema pallidum (strain Nichols).